The primary structure comprises 461 residues: Phosphomethylpyrimidine synthase (461 aa).

Substrate-binding positions include asparagine 80, methionine 109, tyrosine 138, histidine 173, 193–195 (SRG), 234–237 (DGLR), and glutamate 273. Histidine 277 contributes to the Zn(2+) binding site. Tyrosine 300 provides a ligand contact to substrate. Histidine 341 provides a ligand contact to Zn(2+). [4Fe-4S] cluster contacts are provided by cysteine 421, cysteine 424, and cysteine 429.

The protein belongs to the ThiC family. It depends on [4Fe-4S] cluster as a cofactor.

It catalyses the reaction 5-amino-1-(5-phospho-beta-D-ribosyl)imidazole + S-adenosyl-L-methionine = 4-amino-2-methyl-5-(phosphooxymethyl)pyrimidine + CO + 5'-deoxyadenosine + formate + L-methionine + 3 H(+). It functions in the pathway cofactor biosynthesis; thiamine diphosphate biosynthesis. Its function is as follows. Catalyzes the synthesis of the hydroxymethylpyrimidine phosphate (HMP-P) moiety of thiamine from aminoimidazole ribotide (AIR) in a radical S-adenosyl-L-methionine (SAM)-dependent reaction. In Solibacter usitatus (strain Ellin6076), this protein is Phosphomethylpyrimidine synthase.